The sequence spans 140 residues: MATERTLSIIKPDATRRNLTGRINAKFEEAGLRIVAQKRIRLTKDQAEAFYGVHKERPFFAGLVSFMTSGPVVVQVLEGDDAVARNRAIMGATDPRKAEAGTIRAEFAEDIEANSVHGSDAADTAAQEIAFFFAGVEIVG.

6 residues coordinate ATP: Lys-11, Phe-59, Arg-87, Thr-93, Arg-104, and Asn-114. The active-site Pros-phosphohistidine intermediate is His-117.

This sequence belongs to the NDK family. In terms of assembly, homotetramer. Requires Mg(2+) as cofactor.

Its subcellular location is the cytoplasm. The enzyme catalyses a 2'-deoxyribonucleoside 5'-diphosphate + ATP = a 2'-deoxyribonucleoside 5'-triphosphate + ADP. It carries out the reaction a ribonucleoside 5'-diphosphate + ATP = a ribonucleoside 5'-triphosphate + ADP. Major role in the synthesis of nucleoside triphosphates other than ATP. The ATP gamma phosphate is transferred to the NDP beta phosphate via a ping-pong mechanism, using a phosphorylated active-site intermediate. The sequence is that of Nucleoside diphosphate kinase from Acidiphilium cryptum (strain JF-5).